The following is a 258-amino-acid chain: Global transcriptional regulator CodY (258 aa).

The tract at residues 1–156 is GAF domain; it reads MSSLLDKTRM…SATIIGLEIL (156 aa). Residues 204–223 constitute a DNA-binding region (H-T-H motif); it reads ASKIADKVGITRSVIVNALR.

The protein belongs to the CodY family.

Its subcellular location is the cytoplasm. In terms of biological role, DNA-binding global transcriptional regulator which is involved in the adaptive response to starvation and acts by directly or indirectly controlling the expression of numerous genes in response to nutrient availability. During rapid exponential growth, CodY is highly active and represses genes whose products allow adaptation to nutrient depletion. This Clostridium botulinum (strain Okra / Type B1) protein is Global transcriptional regulator CodY.